Consider the following 156-residue polypeptide: Snaclec A15 (156 aa).

Residues 1-23 form the signal peptide; sequence MGRFIFVRFGLLVVFLSLSGTGA. Cystine bridges form between Cys27/Cys38, Cys55/Cys152, and Cys127/Cys144. One can recognise a C-type lectin domain in the interval 34–153; that stretch reads YDQHCYKAFD…CGDDYPFVCK (120 aa). An N-linked (GlcNAc...) asparagine glycan is attached at Asn141.

The protein belongs to the snaclec family. In terms of assembly, heterodimer; disulfide-linked. As to expression, expressed by the venom gland.

It is found in the secreted. Interferes with one step of hemostasis (modulation of platelet aggregation, or coagulation cascade, for example). In Macrovipera lebetinus (Levantine viper), this protein is Snaclec A15.